The following is a 424-amino-acid chain: Serine--tRNA ligase (424 aa).

231–233 (TAE) lines the L-serine pocket. Residue 262-264 (RSE) participates in ATP binding. Glu-285 contacts L-serine. 349–352 (EISS) is a binding site for ATP. Residue Ser-385 participates in L-serine binding.

It belongs to the class-II aminoacyl-tRNA synthetase family. Type-1 seryl-tRNA synthetase subfamily. As to quaternary structure, homodimer. The tRNA molecule binds across the dimer.

Its subcellular location is the cytoplasm. It carries out the reaction tRNA(Ser) + L-serine + ATP = L-seryl-tRNA(Ser) + AMP + diphosphate + H(+). The catalysed reaction is tRNA(Sec) + L-serine + ATP = L-seryl-tRNA(Sec) + AMP + diphosphate + H(+). It participates in aminoacyl-tRNA biosynthesis; selenocysteinyl-tRNA(Sec) biosynthesis; L-seryl-tRNA(Sec) from L-serine and tRNA(Sec): step 1/1. In terms of biological role, catalyzes the attachment of serine to tRNA(Ser). Is also able to aminoacylate tRNA(Sec) with serine, to form the misacylated tRNA L-seryl-tRNA(Sec), which will be further converted into selenocysteinyl-tRNA(Sec). The chain is Serine--tRNA ligase from Bacillus cereus (strain G9842).